Reading from the N-terminus, the 428-residue chain is Glutamate-1-semialdehyde 2,1-aminomutase (428 aa).

Lys-265 bears the N6-(pyridoxal phosphate)lysine mark.

It belongs to the class-III pyridoxal-phosphate-dependent aminotransferase family. HemL subfamily. As to quaternary structure, homodimer. It depends on pyridoxal 5'-phosphate as a cofactor.

Its subcellular location is the cytoplasm. It catalyses the reaction (S)-4-amino-5-oxopentanoate = 5-aminolevulinate. Its pathway is porphyrin-containing compound metabolism; protoporphyrin-IX biosynthesis; 5-aminolevulinate from L-glutamyl-tRNA(Glu): step 2/2. This Vesicomyosocius okutanii subsp. Calyptogena okutanii (strain HA) protein is Glutamate-1-semialdehyde 2,1-aminomutase.